A 252-amino-acid polypeptide reads, in one-letter code: Phosphomannomutase (252 aa).

The Nucleophile role is filled by D13. Mg(2+) is bound by residues D13 and D15. D15 serves as the catalytic Proton donor/acceptor. Positions 22, 124, 135, 142, 180, and 182 each coordinate alpha-D-mannose 1-phosphate. D208, Y220, and T225 together coordinate Mg(2+).

It belongs to the eukaryotic PMM family. As to quaternary structure, homodimer. Requires Mg(2+) as cofactor.

It is found in the cytoplasm. It catalyses the reaction alpha-D-mannose 1-phosphate = D-mannose 6-phosphate. Its pathway is nucleotide-sugar biosynthesis; GDP-alpha-D-mannose biosynthesis; alpha-D-mannose 1-phosphate from D-fructose 6-phosphate: step 2/2. In terms of biological role, catalyzes the interconversion of mannose-6-phosphate to mannose-1-phosphate, the precursor for the synthesis of GDP-mannose. GDP-mannose is an essential sugar nucleotide for the synthesis of D-mannose-containing cell wall polysaccharides (galactomannans and glucomannans), glycolipids, glycoproteins and the antioxidant L-ascorbate. Can complement the yeast temperature-sensitive mutant sec53-6. The polypeptide is Phosphomannomutase (Solanum lycopersicum (Tomato)).